Consider the following 1283-residue polypeptide: Bifunctional dioxygenase (DOX)-epoxy alcohol synthase (EAS) (1283 aa).

The tract at residues 1-64 (MAEHKNGVAT…LPKEMGDGSY (64 aa)) is disordered. Residues 130–476 (TNSFISQLWN…DGKFNDDELV (347 aa)) are fatty acid alpha-dioxygenase. A heme b-binding site is contributed by His227. Tyr405 is a catalytic residue. Residue His408 participates in heme b binding. The tract at residues 684–1108 (INIIGYNAAK…WDDGCGTDLF (425 aa)) is epoxy alcohol synthase. Residue Cys1035 participates in heme binding.

This sequence in the N-terminal section; belongs to the peroxidase family. In the C-terminal section; belongs to the cytochrome P450 family. In terms of assembly, homotetramer. Heme b is required as a cofactor. It depends on heme as a cofactor.

The enzyme catalyses (9Z,12Z)-octadecadienoate + O2 = (8E,10R,12Z)-10-hydroperoxyoctadeca-8,12-dienoate. It carries out the reaction (8E,10R,12Z)-10-hydroperoxyoctadeca-8,12-dienoate = (12S,13R)-epoxy-(10R)-hydroxy-(8E)-octadecenoate. It catalyses the reaction (9Z)-octadecenoate + O2 = (8R)-hydroperoxy-(9Z)-octadecenoate. Its function is as follows. Bifunctional dioxygenase (DOX)-epoxy alcohol synthase (EAS) that converts linoleic acid (18:2n-6) sequentially to 10(R)-hydroperoxy-8(E),12(Z)-octadecadienoic acid (10R-HPODE) and 10R-HPODE further to 12(13)-epoxy-10-hydroxy-8(E)-octa-decenoic acid as the end product. Linoleic acid is oxidized mainly to the R stereoisomer of 10-HPODE. The dioxygenase domain is also able to oygenate position C-8 of linoleic acid to produce 8(R)-hydroperoxy-8(E),12(Z)-octadecadienoic acid (8R-HPODE). The sequence is that of Bifunctional dioxygenase (DOX)-epoxy alcohol synthase (EAS) from Fusarium oxysporum (strain Fo5176) (Fusarium vascular wilt).